The sequence spans 275 residues: Methyltransferase str2 (275 aa).

This sequence belongs to the methyltransferase superfamily. LaeA methyltransferase family.

Its pathway is mycotoxin biosynthesis. Methyltransferase; part of the gene cluster that mediates the biosynthesis of strobilurin A, an antifungal polyketide that contains a key beta-methoxyacrylate toxophore that targets the complex III of the mitochondrial electron transport chain. Strobilurin biosynthesis begins with construction of benzoyl CoA by step-wise elimination of ammonia from phenylalanine by the phenylalanine ammonia-lyase str11, oxygenation by str8 and retro-Claisen reaction to form benzoic acid, which is activated to its CoA thiolester benzoyl CoA by the dedicated CoA ligase str10. Benzoyl CoA forms the starter unit for the highly reducing polyketide synthase stpks1 that produces the polyketide prestrobilutin A. The FAD-dependent oxygenase str9 then catalyzes the key oxidative rearrangement responsible for the creation of the beta-methoxyacrylate toxophore. Str9 performs epoxidation of the 2,3 olefin of prestrobilutin A, followed by Meinwald rearrangement to furnish the aldehyde intermediate. Rapid enolization of the aldehyde intermediate would give the beta-methoxyacrylate skeleton and methylations catalyzed by str2 and str3 complete the synthesis and lead to the production of strobilurin A. The short-chain dehydrogenase stl2 and the dehydrogenase str4 play a role in the shunt pathway leading to the production of bolineol. The cluster encodes no obvious halogenase gene that could be involved in production of strobilurin B, nor any obvious dimethylallyl-transferase that could be involved in the production of strobilurin G. It is possible that unknown proteins encoded in, or near, the cluster (such as str1 or stl1) may form new classes of halogenases or dimethylally-transferases, or that the responsible genes are located elsewhere on the genome. Similarly, proteins encoded by str5/str6 hydrolases appear to have no chemical role in the biosynthesis of strobilurin A. Finally, no obvious self-resistance gene is found within the cluster. The sequence is that of Methyltransferase str2 from Strobilurus tenacellus.